The primary structure comprises 167 residues: NAD(P)H-quinone oxidoreductase subunit I, chloroplastic (167 aa).

2 consecutive 4Fe-4S ferredoxin-type domains span residues 55 to 84 (GRIH…VDWK) and 95 to 124 (LNYS…MTEE). Cysteine 64, cysteine 67, cysteine 70, cysteine 74, cysteine 104, cysteine 107, cysteine 110, and cysteine 114 together coordinate [4Fe-4S] cluster.

It belongs to the complex I 23 kDa subunit family. As to quaternary structure, NDH is composed of at least 16 different subunits, 5 of which are encoded in the nucleus. The cofactor is [4Fe-4S] cluster.

Its subcellular location is the plastid. The protein resides in the chloroplast thylakoid membrane. It carries out the reaction a plastoquinone + NADH + (n+1) H(+)(in) = a plastoquinol + NAD(+) + n H(+)(out). The enzyme catalyses a plastoquinone + NADPH + (n+1) H(+)(in) = a plastoquinol + NADP(+) + n H(+)(out). In terms of biological role, NDH shuttles electrons from NAD(P)H:plastoquinone, via FMN and iron-sulfur (Fe-S) centers, to quinones in the photosynthetic chain and possibly in a chloroplast respiratory chain. The immediate electron acceptor for the enzyme in this species is believed to be plastoquinone. Couples the redox reaction to proton translocation, and thus conserves the redox energy in a proton gradient. In Citrus sinensis (Sweet orange), this protein is NAD(P)H-quinone oxidoreductase subunit I, chloroplastic.